The following is a 272-amino-acid chain: HMP-PP phosphatase (272 aa).

Asp-8 acts as the Nucleophile in catalysis. Residues Asp-8, Asp-10, and Asp-212 each coordinate Mg(2+).

Belongs to the HAD-like hydrolase superfamily. Cof family. Mg(2+) is required as a cofactor.

The catalysed reaction is 4-amino-2-methyl-5-(diphosphooxymethyl)pyrimidine + H2O = 4-amino-2-methyl-5-(phosphooxymethyl)pyrimidine + phosphate + H(+). Catalyzes the hydrolysis of 4-amino-2-methyl-5-hydroxymethylpyrimidine pyrophosphate (HMP-PP) to 4-amino-2-methyl-5-hydroxymethylpyrimidine phosphate (HMP-P). This chain is HMP-PP phosphatase, found in Escherichia coli O6:H1 (strain CFT073 / ATCC 700928 / UPEC).